The sequence spans 525 residues: Probable feruloyl esterase B-1 (525 aa).

Positions M1–A20 are cleaved as a signal peptide. Cystine bridges form between C26–C75, C61–C114, C187–C442, C256–C273, C282–C292, and C502–C524. N-linked (GlcNAc...) asparagine glycans are attached at residues N51, N80, and N98. The active-site Acyl-ester intermediate is the S188. The Ca(2+) site is built by D257, D260, A262, and D264. 3 N-linked (GlcNAc...) asparagine glycosylation sites follow: N283, N288, and N351. Active-site charge relay system residues include D401 and H441.

It belongs to the tannase family.

It is found in the secreted. It carries out the reaction feruloyl-polysaccharide + H2O = ferulate + polysaccharide.. Its function is as follows. Involved in degradation of plant cell walls. Hydrolyzes the feruloyl-arabinose ester bond in arabinoxylans as well as the feruloyl-galactose and feruloyl-arabinose ester bonds in pectin. The polypeptide is Probable feruloyl esterase B-1 (faeB-1) (Neosartorya fischeri (strain ATCC 1020 / DSM 3700 / CBS 544.65 / FGSC A1164 / JCM 1740 / NRRL 181 / WB 181) (Aspergillus fischerianus)).